The following is a 199-amino-acid chain: Octanoyltransferase (199 aa).

One can recognise a BPL/LPL catalytic domain in the interval 27–199 (SNSYDELWLL…FVQYFLTQFK (173 aa)). Residues 66–73 (RGGQVTYH), 133–135 (SIG), and 146–148 (GIA) contribute to the substrate site. The Acyl-thioester intermediate role is filled by C164.

It belongs to the LipB family.

Its subcellular location is the cytoplasm. It carries out the reaction octanoyl-[ACP] + L-lysyl-[protein] = N(6)-octanoyl-L-lysyl-[protein] + holo-[ACP] + H(+). It functions in the pathway protein modification; protein lipoylation via endogenous pathway; protein N(6)-(lipoyl)lysine from octanoyl-[acyl-carrier-protein]: step 1/2. Functionally, catalyzes the transfer of endogenously produced octanoic acid from octanoyl-acyl-carrier-protein onto the lipoyl domains of lipoate-dependent enzymes. Lipoyl-ACP can also act as a substrate although octanoyl-ACP is likely to be the physiological substrate. In Legionella pneumophila (strain Lens), this protein is Octanoyltransferase.